Consider the following 254-residue polypeptide: Phosphoribosylaminoimidazole-succinocarboxamide synthase (254 aa).

Belongs to the SAICAR synthetase family.

It catalyses the reaction 5-amino-1-(5-phospho-D-ribosyl)imidazole-4-carboxylate + L-aspartate + ATP = (2S)-2-[5-amino-1-(5-phospho-beta-D-ribosyl)imidazole-4-carboxamido]succinate + ADP + phosphate + 2 H(+). It participates in purine metabolism; IMP biosynthesis via de novo pathway; 5-amino-1-(5-phospho-D-ribosyl)imidazole-4-carboxamide from 5-amino-1-(5-phospho-D-ribosyl)imidazole-4-carboxylate: step 1/2. The protein is Phosphoribosylaminoimidazole-succinocarboxamide synthase of Bartonella tribocorum (strain CIP 105476 / IBS 506).